The primary structure comprises 494 residues: Tripartite motif-containing protein 5 (494 aa).

The residue at position 2 (A2) is an N-acetylalanine. The RING-type zinc finger occupies 15–59 (CPICLELLTEPLSLDCGHSFCQACITANHKESTLHQGERSCPLCR). S86 carries the post-translational modification Phosphoserine. A B box-type zinc finger spans residues 91-132 (QKVDLCARHGEKLLLFCQQDGNVICWLCERSQEHRGHHTFLV). Zn(2+) is bound by residues C96, H99, C118, and H124. The stretch at 140–223 (RENLQVVLEM…RLVQSENDMV (84 aa)) forms a coiled coil. The segment at 186–199 (FKQLRDILDCEESN) is required for interaction with GABARAP and for autophagy. The 215-residue stretch at 280–494 (PDLKGMLQVS…LPMTLCSPRS (215 aa)) folds into the B30.2/SPRY domain.

The protein belongs to the TRIM/RBCC family. As to quaternary structure, can form homodimers and homotrimers. In addition to lower-order dimerization, also exhibits a higher-order multimerization and both low- and high-order multimerizations are essential for its restriction activity. Interacts with BTBD1 and BTBD2. Interacts with PSMC4, PSMC5, PSMD7 and HSPA8/HSC70. Interacts (via B30.2/SPRY domain) with HSPA1A/B. Interacts with PSMC2, MAP3K7/TAK1, TAB2 and TAB3. Interacts with SQSTM1. Interacts with TRIM6 and TRIM34. Interacts with ULK1 (phosphorylated form), GABARAP, GABARAPL1, GABARAPL2, MAP1LC3A, MAP1LC3C and BECN1. Post-translationally, degraded in a proteasome-independent fashion in the absence of viral infection but in a proteasome-dependent fashion following exposure to restriction sensitive virus. Autoubiquitinated in a RING finger- and UBE2D2-dependent manner. Monoubiquitinated by TRIM21. Deubiquitinated by Yersinia YopJ. Ubiquitination may not lead to proteasomal degradation.

The protein resides in the cytoplasm. It is found in the nucleus. The catalysed reaction is S-ubiquitinyl-[E2 ubiquitin-conjugating enzyme]-L-cysteine + [acceptor protein]-L-lysine = [E2 ubiquitin-conjugating enzyme]-L-cysteine + N(6)-ubiquitinyl-[acceptor protein]-L-lysine.. It functions in the pathway protein modification; protein ubiquitination. In terms of biological role, capsid-specific restriction factor that prevents infection from non-host-adapted retroviruses. Blocks viral replication early in the life cycle, after viral entry but before reverse transcription. In addition to acting as a capsid-specific restriction factor, also acts as a pattern recognition receptor that activates innate immune signaling in response to the retroviral capsid lattice. Binding to the viral capsid triggers its E3 ubiquitin ligase activity, and in concert with the heterodimeric ubiquitin conjugating enzyme complex UBE2V1-UBE2N (also known as UBC13-UEV1A complex) generates 'Lys-63'-linked polyubiquitin chains, which in turn are catalysts in the autophosphorylation of the MAP3K7/TAK1 complex (includes TAK1, TAB2, and TAB3). Activation of the MAP3K7/TAK1 complex by autophosphorylation results in the induction and expression of NF-kappa-B and MAPK-responsive inflammatory genes, thereby leading to an innate immune response in the infected cell. Plays a role in regulating autophagy through activation of autophagy regulator BECN1 by causing its dissociation from its inhibitors BCL2 and TAB2. This chain is Tripartite motif-containing protein 5 (TRIM5), found in Plecturocebus donacophilus (Bolivian gray titi monkey).